Reading from the N-terminus, the 317-residue chain is Large ribosomal subunit protein uL10 (317 aa).

The residue at position 24 (Tyr24) is a Phosphotyrosine. Position 59 is a phosphothreonine (Thr59). A Glycyl lysine isopeptide (Lys-Gly) (interchain with G-Cter in ubiquitin) cross-link involves residue Lys264. A disordered region spans residues 294-317; the sequence is APAKVEAKEESEESDEDMGFGLFD. Residue Lys297 forms a Glycyl lysine isopeptide (Lys-Gly) (interchain with G-Cter in SUMO1); alternate linkage. Residue Lys297 forms a Glycyl lysine isopeptide (Lys-Gly) (interchain with G-Cter in SUMO2); alternate linkage. Positions 302-311 are enriched in acidic residues; it reads EESEESDEDM. Ser304 and Ser307 each carry phosphoserine.

It belongs to the universal ribosomal protein uL10 family. As to quaternary structure, P0 forms a pentameric complex by interaction with dimers of P1 and P2. Identified in a IGF2BP1-dependent mRNP granule complex containing untranslated mRNAs. Interacts with APEX1. Interacts with FMR1 isoform 6. In terms of processing, ubiquitinated at Lys-264 by RNF14 and RNF25 in response to ribosome collisions (ribosome stalling).

It localises to the nucleus. The protein resides in the cytoplasm. Ribosomal protein P0 is the functional equivalent of E.coli protein L10. This is Large ribosomal subunit protein uL10 (RPLP0) from Homo sapiens (Human).